Reading from the N-terminus, the 2114-residue chain is Protein CELLULOSE SYNTHASE INTERACTIVE 2 (2114 aa).

42 ARM repeats span residues 2 to 42 (TSEM…LLGL), 46 to 87 (KKEC…VLCK), 89 to 128 (KNVR…EVSL), 135 to 177 (NVGT…NLCG), 180 to 219 (DGFW…RLIR), 222 to 262 (TSSI…AITS), 265 to 305 (EEAI…SYGT), 354 to 394 (GDTR…SLFG), 396 to 435 (VDLS…NLCK), 479 to 519 (EESR…NLCC), 522 to 561 (EEIR…KLIK), 563 to 595 (ADPS…HVLA), 601 to 640 (EFVT…DLFS), 643 to 682 (KDLC…SLSN), 708 to 750 (AKTN…RVLR), 774 to 816 (SDVF…LLAK), 825 to 865 (HNPF…RFCK), 870 to 910 (LLGR…CAAK), 914 to 953 (TLWA…IQRP), 994 to 1033 (PSNR…KWIA), 1044 to 1083 (PKVV…ALVR), 1087 to 1128 (DKTI…LVQN), 1141 to 1182 (ERVR…RIAD), 1185 to 1225 (DLSK…SLFR), 1227 to 1264 (PEIT…LCEL), 1265 to 1304 (FSSE…ALVK), 1312 to 1353 (RPDI…FLFT), 1355 to 1394 (EGLR…RLLD), 1396 to 1435 (KRFV…KMAK), 1454 to 1494 (ISQL…MVQP), 1496 to 1525 (LLIL…KPMV), 1526 to 1564 (LESL…SLLE), 1566 to 1605 (QRFQ…RSSV), 1606 to 1648 (TWPK…NILR), 1650 to 1689 (NPEH…ENQD), 1690 to 1730 (SSSV…RNPK), 1732 to 1771 (RETK…DISQ), 1772 to 1813 (HEGL…NFAM), 1816 to 1855 (RTSR…SLFS), 1857 to 1898 (HTLQ…TILT), 1901 to 1940 (PKLR…TLRQ), and 1949 to 1993 (TARS…CLPG). The C2 domain occupies 1974–2087 (SPAPSSFHER…LSEGSYSGIF (114 aa)).

Associates with cellulase synthase (CESA) complexes. Binds to cortical microtubules.

Its subcellular location is the cell membrane. It localises to the cytoplasm. The protein resides in the cytoskeleton. In terms of biological role, regulator of the microtubular cytoskeleton. Microtubule-associated protein involved in the association of cellulase synthase (CESA) complexes (CSCs) and cortical microtubules. Promotes dynamics of CSCs in the plasma membrane. Regulates primary cell wall biosynthesis and cellulose microfibrils organization. The protein is Protein CELLULOSE SYNTHASE INTERACTIVE 2 of Arabidopsis thaliana (Mouse-ear cress).